We begin with the raw amino-acid sequence, 147 residues long: Ubiquitin-conjugating enzyme E2 4 (147 aa).

A UBC core domain is found at 1–147 (MSLKRINKEL…AKEWTKKYAV (147 aa)). The Glycyl thioester intermediate role is filled by Cys-85.

This sequence belongs to the ubiquitin-conjugating enzyme family.

The enzyme catalyses S-ubiquitinyl-[E1 ubiquitin-activating enzyme]-L-cysteine + [E2 ubiquitin-conjugating enzyme]-L-cysteine = [E1 ubiquitin-activating enzyme]-L-cysteine + S-ubiquitinyl-[E2 ubiquitin-conjugating enzyme]-L-cysteine.. It participates in protein modification; protein ubiquitination. Its function is as follows. E2 ubiquitin-conjugating enzyme that catalyzes the covalent attachment of ubiquitin to other proteins. Mediates the selective degradation of short-lived and abnormal proteins. Mediates ubiquitination of PEX5. The polypeptide is Ubiquitin-conjugating enzyme E2 4 (UBC4) (Candida albicans (Yeast)).